Consider the following 151-residue polypeptide: 3-hydroxyacyl-[acyl-carrier-protein] dehydratase FabZ (151 aa).

The active site involves H57.

The protein belongs to the thioester dehydratase family. FabZ subfamily.

The protein localises to the cytoplasm. The enzyme catalyses a (3R)-hydroxyacyl-[ACP] = a (2E)-enoyl-[ACP] + H2O. Involved in unsaturated fatty acids biosynthesis. Catalyzes the dehydration of short chain beta-hydroxyacyl-ACPs and long chain saturated and unsaturated beta-hydroxyacyl-ACPs. This is 3-hydroxyacyl-[acyl-carrier-protein] dehydratase FabZ from Synechococcus sp. (strain CC9605).